A 421-amino-acid chain; its full sequence is Serine hydroxymethyltransferase (421 aa).

(6S)-5,6,7,8-tetrahydrofolate-binding positions include Leu-121 and 125–127 (GHL). Lys-229 carries the N6-(pyridoxal phosphate)lysine modification.

It belongs to the SHMT family. In terms of assembly, homodimer. Pyridoxal 5'-phosphate serves as cofactor.

Its subcellular location is the cytoplasm. The catalysed reaction is (6R)-5,10-methylene-5,6,7,8-tetrahydrofolate + glycine + H2O = (6S)-5,6,7,8-tetrahydrofolate + L-serine. The protein operates within one-carbon metabolism; tetrahydrofolate interconversion. Its pathway is amino-acid biosynthesis; glycine biosynthesis; glycine from L-serine: step 1/1. Functionally, catalyzes the reversible interconversion of serine and glycine with tetrahydrofolate (THF) serving as the one-carbon carrier. This reaction serves as the major source of one-carbon groups required for the biosynthesis of purines, thymidylate, methionine, and other important biomolecules. Also exhibits THF-independent aldolase activity toward beta-hydroxyamino acids, producing glycine and aldehydes, via a retro-aldol mechanism. The chain is Serine hydroxymethyltransferase from Actinobacillus pleuropneumoniae serotype 5b (strain L20).